A 211-amino-acid chain; its full sequence is ATP phosphoribosyltransferase (211 aa).

The protein belongs to the ATP phosphoribosyltransferase family. Short subfamily. As to quaternary structure, heteromultimer composed of HisG and HisZ subunits.

It is found in the cytoplasm. It catalyses the reaction 1-(5-phospho-beta-D-ribosyl)-ATP + diphosphate = 5-phospho-alpha-D-ribose 1-diphosphate + ATP. It participates in amino-acid biosynthesis; L-histidine biosynthesis; L-histidine from 5-phospho-alpha-D-ribose 1-diphosphate: step 1/9. Catalyzes the condensation of ATP and 5-phosphoribose 1-diphosphate to form N'-(5'-phosphoribosyl)-ATP (PR-ATP). Has a crucial role in the pathway because the rate of histidine biosynthesis seems to be controlled primarily by regulation of HisG enzymatic activity. The protein is ATP phosphoribosyltransferase of Hahella chejuensis (strain KCTC 2396).